The chain runs to 92 residues: MANSPSAKKRAKQAEKRRSHNASLRSMVRTYIKNVVKAIDAKDAEKAQAAYVLAVPVIDRMADKGIIHKNKAARHKGRLNGHIKALNLAAAA.

The disordered stretch occupies residues 1–23; it reads MANSPSAKKRAKQAEKRRSHNAS. The segment covering 7–20 has biased composition (basic residues); that stretch reads AKKRAKQAEKRRSH.

The protein belongs to the bacterial ribosomal protein bS20 family.

Binds directly to 16S ribosomal RNA. The chain is Small ribosomal subunit protein bS20 from Pseudomonas fluorescens (strain ATCC BAA-477 / NRRL B-23932 / Pf-5).